Consider the following 492-residue polypeptide: Protein adenylyltransferase Fic (492 aa).

Low complexity predominate over residues 1-17 (MCTEAEQPSPPAQQQEQ). Residues 1–25 (MCTEAEQPSPPAQQQEQGNPPLCKA) form a disordered region. The helical transmembrane segment at 33–55 (LYRLVLLFVAGSLAAWTFHALSS) threads the bilayer. TPR repeat units follow at residues 118 to 151 (ALGA…APRH) and 152 to 186 (PEVL…SPSN). The Inhibitory (S/T)XXXE(G/N) motif signature appears at 243-248 (SVGIEG). ATP contacts are provided by residues Glu247 and 328 to 331 (VGGH). The Fido domain occupies 297–432 (ITIKDILELH…IRPFVRFIAD (136 aa)). The active site involves His375. Residues 379–386 (DGNGRTSR), 411–412 (YY), and Asn419 each bind ATP.

The protein belongs to the fic family. As to quaternary structure, homodimer.

The protein resides in the membrane. It carries out the reaction L-tyrosyl-[protein] + ATP = O-(5'-adenylyl)-L-tyrosyl-[protein] + diphosphate. The enzyme catalyses L-threonyl-[protein] + ATP = 3-O-(5'-adenylyl)-L-threonyl-[protein] + diphosphate. It catalyses the reaction 3-O-(5'-adenylyl)-L-threonyl-[protein] + H2O = L-threonyl-[protein] + AMP + H(+). Its activity is regulated as follows. The side chain of Glu-247 determines which of the two opposing activities (AMPylase or de-AMPylase) will take place. In response to endoplasmic reticulum stress, mediates de-AMPylase activity. Adenylyltransferase activity is inhibited by the inhibitory helix present at the N-terminus: Glu-247 binds ATP and competes with ATP-binding at Arg-386, thereby preventing adenylyltransferase activity. In unstressed cells, disengagement of Glu-247 promotes adenylyltransferase activity. Activation dissociates ATP-binding from Glu-247, allowing ordered binding of the entire ATP moiety with the alpha-phosphate in an orientation that is productive for accepting an incoming target hydroxyl side chain. Functionally, protein that can both mediate the addition of adenosine 5'-monophosphate (AMP) to specific residues of target proteins (AMPylation), and the removal of the same modification from target proteins (de-AMPylation), depending on the context. The side chain of Glu-247 determines which of the two opposing activities (AMPylase or de-AMPylase) will take place. Acts as a key regulator of the unfolded protein response (UPR) by mediating AMPylation or de-AMPylation of Hsc70-3/BiP. In unstressed cells, acts as an adenylyltransferase by mediating AMPylation of Hsc70-3/BiP at 'Thr-518', thereby inactivating it. In response to endoplasmic reticulum stress, acts as a phosphodiesterase by mediating removal of ATP (de-AMPylation) from Hsc70-3/BiP at 'Thr-518', leading to restore HSPA5/BiP activity. This Drosophila sechellia (Fruit fly) protein is Protein adenylyltransferase Fic.